The primary structure comprises 129 residues: Small ribosomal subunit protein uS11 (129 aa).

This sequence belongs to the universal ribosomal protein uS11 family. Part of the 30S ribosomal subunit.

In terms of biological role, located on the platform of the 30S subunit. The chain is Small ribosomal subunit protein uS11 from Haloarcula marismortui (strain ATCC 43049 / DSM 3752 / JCM 8966 / VKM B-1809) (Halobacterium marismortui).